A 550-amino-acid chain; its full sequence is Sorting nexin-33 (550 aa).

The SH3 domain maps to 1-61; the sequence is MALKARALYS…PASYVEIQSS (61 aa). The segment at 62–152 is disordered; the sequence is RSGSVQVDYS…QDSIASGKRG (91 aa). Residues 86-102 are compositionally biased toward acidic residues; the sequence is YDDDDEEDDDDWDDWDD. The segment covering 128–144 has biased composition (basic and acidic residues); sequence SRPEYSHRPRPALERQD. The PX domain maps to 206 to 316; the sequence is FNCSVEEPTK…HFLGCQDEKQ (111 aa). The 204-residue stretch at 347–550 folds into the BAR domain; the sequence is LQDVEERVDV…EKTLHLYDEL (204 aa).

Belongs to the sorting nexin family.

It localises to the cytoplasm. Its subcellular location is the cytosol. The protein resides in the membrane. It is found in the cytoplasmic vesicle membrane. Its function is as follows. Plays a role in the reorganization of the cytoskeleton, endocytosis and cellular vesicle trafficking, both during interphase and at the end of mitotic cell divisions. Required for efficient progress through mitosis and cytokinesis. Required for normal formation of the cleavage furrow at the end of mitosis. Modulates endocytosis of cell-surface proteins. Promotes membrane tubulation (in vitro). May promote the formation of macropinosomes. This Xenopus laevis (African clawed frog) protein is Sorting nexin-33 (snx33).